A 296-amino-acid polypeptide reads, in one-letter code: Lipoyl synthase (296 aa).

Residues cysteine 37, cysteine 42, cysteine 48, cysteine 63, cysteine 67, cysteine 70, and serine 276 each contribute to the [4Fe-4S] cluster site. The region spanning 49-265 (WSKKHTTVMI…ERVAKTKGFL (217 aa)) is the Radical SAM core domain.

The protein belongs to the radical SAM superfamily. Lipoyl synthase family. [4Fe-4S] cluster serves as cofactor.

Its subcellular location is the cytoplasm. It catalyses the reaction [[Fe-S] cluster scaffold protein carrying a second [4Fe-4S](2+) cluster] + N(6)-octanoyl-L-lysyl-[protein] + 2 oxidized [2Fe-2S]-[ferredoxin] + 2 S-adenosyl-L-methionine + 4 H(+) = [[Fe-S] cluster scaffold protein] + N(6)-[(R)-dihydrolipoyl]-L-lysyl-[protein] + 4 Fe(3+) + 2 hydrogen sulfide + 2 5'-deoxyadenosine + 2 L-methionine + 2 reduced [2Fe-2S]-[ferredoxin]. The protein operates within protein modification; protein lipoylation via endogenous pathway; protein N(6)-(lipoyl)lysine from octanoyl-[acyl-carrier-protein]: step 2/2. Functionally, catalyzes the radical-mediated insertion of two sulfur atoms into the C-6 and C-8 positions of the octanoyl moiety bound to the lipoyl domains of lipoate-dependent enzymes, thereby converting the octanoylated domains into lipoylated derivatives. The protein is Lipoyl synthase of Rickettsia massiliae (strain Mtu5).